Here is a 287-residue protein sequence, read N- to C-terminus: Cysteine-rich repeat secretory protein 59 (287 aa).

Positions 1–26 (METTKKLSPIFCFSSLLCLFFTMNQA) are cleaved as a signal peptide. Gnk2-homologous domains follow at residues 32 to 134 (HMDT…DKFF) and 140 to 250 (KKPN…ITTS). Residues asparagine 43, asparagine 47, asparagine 63, asparagine 72, asparagine 93, asparagine 103, asparagine 111, and asparagine 212 are each glycosylated (N-linked (GlcNAc...) asparagine).

Belongs to the cysteine-rich repeat secretory protein family.

Its subcellular location is the secreted. The chain is Cysteine-rich repeat secretory protein 59 (CRRSP59) from Arabidopsis thaliana (Mouse-ear cress).